An 872-amino-acid chain; its full sequence is Alanine--tRNA ligase (872 aa).

Zn(2+)-binding residues include H567, H571, C669, and H673.

The protein belongs to the class-II aminoacyl-tRNA synthetase family. Zn(2+) is required as a cofactor.

It is found in the cytoplasm. The enzyme catalyses tRNA(Ala) + L-alanine + ATP = L-alanyl-tRNA(Ala) + AMP + diphosphate. Its function is as follows. Catalyzes the attachment of alanine to tRNA(Ala) in a two-step reaction: alanine is first activated by ATP to form Ala-AMP and then transferred to the acceptor end of tRNA(Ala). Also edits incorrectly charged Ser-tRNA(Ala) and Gly-tRNA(Ala) via its editing domain. The protein is Alanine--tRNA ligase of Streptococcus suis (strain 98HAH33).